The chain runs to 72 residues: Large ribosomal subunit protein uL29 (72 aa).

Belongs to the universal ribosomal protein uL29 family.

The polypeptide is Large ribosomal subunit protein uL29 (rpmC) (Chlamydia pneumoniae (Chlamydophila pneumoniae)).